The following is a 309-amino-acid chain: Protein FdhE homolog (309 aa).

Belongs to the FdhE family.

The protein localises to the cytoplasm. Necessary for formate dehydrogenase activity. This Serratia proteamaculans (strain 568) protein is Protein FdhE homolog.